The following is a 398-amino-acid chain: Streptopain (398 aa).

A signal peptide spans methionine 1–alanine 27. The propeptide occupies aspartate 28–lysine 145. Catalysis depends on cysteine 192, which acts as the Nucleophile. A Cysteine methyl disulfide; in zymogen form modification is found at cysteine 192. A protein is bound by residues serine 282 and glycine 339. Catalysis depends on histidine 340, which acts as the Proton acceptor. The segment at arginine 368–glutamine 390 is C-terminal active site loop.

The protein belongs to the peptidase C10 family. Monomer. The mature protease is derived from the precursor sequence by cleavage, either in cis via an autocatalytic mechanism, or in trans by mature SpeB or host proteases (trypsin, plasmin or subtilisin). Maturation can involve a number of protein cleavage intermediates. Mature SpeB probably plays the most important role in protein maturation in physiological conditions. Post-translationally, methylthiolation at Cys-192 of the inactive zymogen form is probably involved in the mechanism of secretion of the proteinase into the culture fluid.

It localises to the secreted. It is found in the host extracellular space. Its subcellular location is the host cytoplasm. The catalysed reaction is Preferential cleavage with hydrophobic residues at P2, P1 and P1'.. Its activity is regulated as follows. Synthesized as an inactive zymogen to protect the intracellular components of the bacteria from proteolytic activity during protein production. Once secreted into the extracellular milieu, cleaved into the active protease: maturation can be mediated in cis by autocatalytic cleavage, or in trans by mature SpeB or host proteases. Protease activity is strongly inhibited by zinc and copper, which prevent its maturation into an active protease: inhibition by metal ions may be required to prevent proteolysis of streptococcal proteins. Cysteine protease that acts as a key streptococcal virulence factor by cleaving host proteins involved in immune response. Triggers inflammation by mediating cleavage of host proteins, which can both promote host pathogenesis by triggering sterile inflammation and/or restrict streptococcal infection, depending on host immune statue and infection site. Cleaves host gasdermin-A (GSDMA) in epithelial cells, promoting GSDMA activation and formation of gasdermin pores, triggering pyroptosis. Pyroptosis triggers the elimination of the infected skin cell, depriving the pathogen of its protective niche, while inducing an inflammatory response. This ultimately prevents bacterial penetration of the epithelial barrier and a subsequent systemic dissemination of the pathogen. Also mediates cleavage of the cytokine precursor interleukin-1 beta (IL1B) to its mature form, resulting in inflammation and septic shock. SpeB-mediated maturation of IL1B plays a dual role depending on infection site: while IL1B inflammatory response prevents bacterial growth during invasive skin infections, it promotes streptococcal infection of the nasopharynx by disrupting colonization resistance mediated by the microbiota. Inhibits host autophagy be catalyzing cleavage and inactivation of key autophagy factors, such as CALCOCO2, NBR1 and SQSTM1. Cleaves and inhibits a number of complement factors, such as C2, C3-beta chain of C3, C4, C5 or SERPING1, thereby promoting evasion of host immunity. May also impair adaptive immunity by catalyzing cleavage and degradation of host immunoglobulins to promote immune system evasion; the relevance of this activity is however unsure in vivo. Catalyzes maturation and release of the peptide hormone bradykinin from the precursor Kininogen-1 (KNG1) to produce hypotension during septic shock. Also involved in bacterial translocation across the host epithelial barrier by mediating cleavage and degradation of host epithelial junction proteins, such as CDH1 and OCLN. Additionally, has been involved in degradation of fibronectin and vitronectin, two host extracellular matrix proteins involved in tissue integrity. Also able to catalyze cleavage and degradation of streptococcal proteins, such as C5a peptidase, EndoS or SmeZ. Degradation of streptococcal proteins is however strictly regulated to preserve integrity of other virulence factors. The protein is Streptopain (speB) of Streptococcus pyogenes serotype M28 (strain MGAS6180).